Here is an 863-residue protein sequence, read N- to C-terminus: MWGSYTKVSLIESQEPIALSRPVVPPKPNTSALRRVLRRARDGFALNIDEAVVAMTARGEDLADLCASAARVRDVGLETAGRRGADGRLPITYSRKVFIPVTHLCRDSCHYCTFVTAPDMLRTQGAGMYLEPNEILNLARRGSELGCKEALFTLGDRPEDRWAQARDWLAERGYDSTLSYLRAMAIRVLEETGLLPHLNPGVMSWSELSRLKPVAPSMGMMLETTSRRLFETKGLAHYGSLDKDPTVRLRVLTDAGRLSIPFTTGLLVGIGETLAERADTLHEIRKSNKEFGHVQEVIVQNFRAKEHTAMAAVPDARIEDYLATVAVARLVLGPAMRIQAPPNLVSREECLALVTAGVDDWGGVSPLTPDHVNPERPWPALHELAAVTAEAGYTLVQRLTAQPKYVQAGAAWIDPRVRGHVVALADPVTGLARDVNPVGMPWQEPDDVESAGRMDINTAIDTEGRNTEARSDLDSAFGDWESIRAHVHELADCAPERIDTDVLAALRSAERDPAGCTDDEYLALATADGPALEAVTALADSLRRDVVGDDVTFVVNRNINFTNICYTGCRFCAFAQRKGDTDAYSLSREEVAERAWEAHVQGATEVCMQGGIDPELPVTGYVDLVRAVKTRVPSMHVHAFSPMEIANGVAKSGFSIREWLISLREAGLDTIPGTAAEILDDEVRWVLTKGKLPTSMWIEIVTTAHEVGLRSSSTMMYGHVDGPRHWVAHLQVLRDIQDRTGGFTEFVPLPFVHQNSPLYLAGAARPGPTHRDNRAVHALARIMLHGRISHIQTSWVKLGVERTQAMLNGGANDLGGTLMEETISRMAGSEYGSAKTVAELIAIAEGIGRTARQRTTTYALRGA.

Radical SAM core domains lie at Ile91–Asn343 and Val551–Gln792. Residues Thr92 to Leu424 form a cofG-like region. [4Fe-4S] cluster contacts are provided by Cys105, Cys109, Cys112, Cys565, Cys569, and Cys572. The segment at Asp528–Arg861 is cofH-like.

The protein in the N-terminal section; belongs to the radical SAM superfamily. CofG family. It in the C-terminal section; belongs to the radical SAM superfamily. CofH family. It depends on [4Fe-4S] cluster as a cofactor.

The enzyme catalyses 5-amino-6-(D-ribitylamino)uracil + L-tyrosine + S-adenosyl-L-methionine = 5-amino-5-(4-hydroxybenzyl)-6-(D-ribitylimino)-5,6-dihydrouracil + 2-iminoacetate + 5'-deoxyadenosine + L-methionine + H(+). It catalyses the reaction 5-amino-5-(4-hydroxybenzyl)-6-(D-ribitylimino)-5,6-dihydrouracil + S-adenosyl-L-methionine = 7,8-didemethyl-8-hydroxy-5-deazariboflavin + 5'-deoxyadenosine + L-methionine + NH4(+) + H(+). It participates in cofactor biosynthesis; coenzyme F0 biosynthesis. Functionally, catalyzes the radical-mediated synthesis of 7,8-didemethyl-8-hydroxy-5-deazariboflavin (FO) from 5-amino-6-(D-ribitylamino)uracil and L-tyrosine. This chain is FO synthase (fbiC), found in Mycobacterium leprae (strain TN).